We begin with the raw amino-acid sequence, 229 residues long: Small ribosomal subunit protein uS3 (229 aa).

Residues 39–107 (VRQFLIKELK…PAQINISEVR (69 aa)) form the KH type-2 domain.

Belongs to the universal ribosomal protein uS3 family. In terms of assembly, part of the 30S ribosomal subunit. Forms a tight complex with proteins S10 and S14.

Functionally, binds the lower part of the 30S subunit head. Binds mRNA in the 70S ribosome, positioning it for translation. The polypeptide is Small ribosomal subunit protein uS3 (Photobacterium profundum (strain SS9)).